The primary structure comprises 743 residues: Merozoite surface protein 9 (743 aa).

The first 23 residues, 1–23 (MMNMKIVLFSLLLFVIRWNIISC), serve as a signal peptide directing secretion. Residues 77–235 (KELLKEKQYT…VNDEDDVNDE (159 aa)) are interaction with MSP1 and host SLC4A1/Band 3. Disordered stretches follow at residues 202–282 (KSQG…ATAY), 459–487 (DNQA…PTED), 512–540 (NNTP…ENFD), and 666–743 (VDAL…EESK). The span at 211-224 (SQNQNENNDNQKYQ) shows a compositional bias: polar residues. 8 repeat units span residues 226–231 (VNDEDD), 232–237 (VNDEED), 238–243 (TNDDED), 244–249 (TNDEED), 250–255 (TNDDED), 256–261 (TNDDED), 262–267 (TNDEED), and 268–273 (TNDEED). Residues 226 to 273 (VNDEDDVNDEEDTNDDEDTNDEEDTNDDEDTNDDEDTNDEEDTNDEED) are 8 X 6 AA tandem repeats of [VT]-N-D-[ED]-[ED]-D. Over residues 226-274 (VNDEDDVNDEEDTNDDEDTNDEEDTNDDEDTNDDEDTNDEEDTNDEEDH) the composition is skewed to acidic residues. An interaction with MSP1 and host SLC4A1/Band 3 region spans residues 364–528 (LKDNLINYEF…PPTQSKKKNK (165 aa)). Residues 459 to 473 (DNQAVDTKSMEEPKV) are compositionally biased toward basic and acidic residues. Residues 512–521 (NNTPNVVPPT) show a composition bias toward low complexity. A coiled-coil region spans residues 644-733 (NQETEEEMEK…QEEEEEEEIV (90 aa)). A compositionally biased stretch (basic and acidic residues) spans 672–721 (KNKEEEEKEKEKEEKEKEEKEKEKEEKEKEEKEKEEKEKEEKEEEKKEKE). The segment covering 722 to 733 (EEQEEEEEEEIV) has biased composition (acidic residues).

Belongs to the plasmodium ABRA family. Forms a complex composed of MSP1, MSP6, MSP7, MSP9 and MSP3; within the complex, MSP6 and MSP9 mediate the binding to the host erythrocyte. Interacts with MSP1 subunits p19 and p42; the interaction is direct. Interacts with host SLC4A1/Band 3 protein (via the 5ABC region). MSP1 subunits p19 or p42, and MSP9 form a co-ligand complex that interacts with host SLC4A1/Band 3 protein. Post-translationally, not glycosylated.

The protein localises to the cell membrane. The protein resides in the parasitophorous vacuole lumen. It is found in the secreted. During the asexual blood stage, involved in the sialic acid-independent (SAID) merozoite invasion of host erythrocytes by binding to host SLC4A1/Band 3 protein on the surface of the host erythrocyte. The sequence is that of Merozoite surface protein 9 from Plasmodium falciparum (isolate 3D7).